An 824-amino-acid chain; its full sequence is LPS-assembly protein LptD (824 aa).

Disordered stretches follow at residues 1-26 and 67-117; these read MTEQ…RRVR and TQTP…PAYV. The first 48 residues, 1–48, serve as a signal peptide directing secretion; that stretch reads MTEQRRSPHHPATRPPAPPGTSRRVRLPASALRPLVLAMAGLTVSAHA. A compositionally biased stretch (low complexity) spans 98–115; that stretch reads NTLNLSPSSTPSNPNAPA.

Belongs to the LptD family. Component of the lipopolysaccharide transport and assembly complex. Interacts with LptE and LptA.

The protein resides in the cell outer membrane. Together with LptE, is involved in the assembly of lipopolysaccharide (LPS) at the surface of the outer membrane. This chain is LPS-assembly protein LptD, found in Cupriavidus metallidurans (strain ATCC 43123 / DSM 2839 / NBRC 102507 / CH34) (Ralstonia metallidurans).